Here is a 501-residue protein sequence, read N- to C-terminus: tRNA (guanine(37)-N(1))-methyltransferase (501 aa).

Residues histidine 282, 320–321 (DL), 348–349 (DG), and asparagine 380 contribute to the S-adenosyl-L-methionine site. Residues 474 to 501 (LQNDQEPPLKRQKTGDPFSGEPQIASDS) form a disordered region.

This sequence belongs to the class I-like SAM-binding methyltransferase superfamily. TRM5/TYW2 family. In terms of assembly, monomer.

The protein localises to the mitochondrion matrix. It localises to the nucleus. Its subcellular location is the cytoplasm. The enzyme catalyses guanosine(37) in tRNA + S-adenosyl-L-methionine = N(1)-methylguanosine(37) in tRNA + S-adenosyl-L-homocysteine + H(+). Functionally, involved in mitochondrial tRNA methylation. Specifically methylates the N1 position of guanosine-37 in various tRNAs. Methylation is not dependent on the nature of the nucleoside 5' of the target nucleoside. This is the first step in the biosynthesis of wybutosine (yW), a modified base adjacent to the anticodon of tRNAs and required for accurate decoding. This Mus musculus (Mouse) protein is tRNA (guanine(37)-N(1))-methyltransferase (Trmt5).